The chain runs to 379 residues: Putative cyclic ADP-D-ribose synthase TIR2 (379 aa).

The TIR domain occupies 254–379 (KVYDVFISHS…TISWTTGLVK (126 aa)). Residue glutamate 335 is part of the active site.

In terms of assembly, homodimer.

Its subcellular location is the cytoplasm. Activated upon phage infection. Its function is as follows. One of 2 TIR-like protein components of the Thoeris antiviral defense system, composed of ThsA, TIR1 (thsB1) and TIR2 (thsB2). Phage infection activates this protein; by 70 minutes post-infection with phage SPO1, TIR2 generates a signal molecule that in turn activates the NAD(+) hydrolase activity of ThsA (tested with B.cereus). The signal is similar to cyclic ADP-D-ribose, but how it differs is unknown. Expression of Thoeris in B.subtilis (strain BEST7003) confers resistance to phages phi29, phi3T, SPBeta, SBSphi11, SBSphi13, SBSphiJ, SPO1 and SPR but not SBSphiC. The TIR paralogs confer resistance to different phages; this subunit confers resistance to phi3T, SPBeta, SBSphi13, SBSphiJ, SPO1 and SPR but not phi29, SBSphi11 or SBSphiC. There is overlap in the phage range for this system, both TIR1 and TIR2 are activated by SBSphi13, SBSphiJ, SPO1 and SPR. Probably hydrolyzes NAD(+) to make a cyclic ADP-D-ribose (cADPR) signaling molecule; might make 3'cADPR. The chain is Putative cyclic ADP-D-ribose synthase TIR2 from Cytobacillus dafuensis (Bacillus dafuensis).